Consider the following 242-residue polypeptide: Tryptophan synthase alpha chain (242 aa).

Catalysis depends on proton acceptor residues E31 and D42.

This sequence belongs to the TrpA family. Tetramer of two alpha and two beta chains.

The enzyme catalyses (1S,2R)-1-C-(indol-3-yl)glycerol 3-phosphate + L-serine = D-glyceraldehyde 3-phosphate + L-tryptophan + H2O. It functions in the pathway amino-acid biosynthesis; L-tryptophan biosynthesis; L-tryptophan from chorismate: step 5/5. The alpha subunit is responsible for the aldol cleavage of indoleglycerol phosphate to indole and glyceraldehyde 3-phosphate. The protein is Tryptophan synthase alpha chain of Staphylococcus aureus (strain Mu3 / ATCC 700698).